The chain runs to 499 residues: Xylulose kinase (499 aa).

A substrate-binding site is contributed by Met-81–His-82. The active-site Proton acceptor is the Asp-239.

This sequence belongs to the FGGY kinase family.

The catalysed reaction is D-xylulose + ATP = D-xylulose 5-phosphate + ADP + H(+). In terms of biological role, catalyzes the phosphorylation of D-xylulose to D-xylulose 5-phosphate. The polypeptide is Xylulose kinase (Bacillus subtilis (strain 168)).